Reading from the N-terminus, the 434-residue chain is DNA primase DnaG (434 aa).

Residues 171–250 (DAIIIVEGRA…AFSPRRRSVE (80 aa)) enclose the Toprim domain. The Mg(2+) site is built by E177, D219, and D221. The tract at residues 290–319 (GEEEHSSVSQKEEGNNTTPDVPADLPEEPP) is disordered. Residues 292-303 (EEHSSVSQKEEG) show a composition bias toward basic and acidic residues.

Belongs to the archaeal DnaG primase family. As to quaternary structure, forms a ternary complex with MCM helicase and DNA. Requires Mg(2+) as cofactor.

It catalyses the reaction ssDNA + n NTP = ssDNA/pppN(pN)n-1 hybrid + (n-1) diphosphate.. In terms of biological role, RNA polymerase that catalyzes the synthesis of short RNA molecules used as primers for DNA polymerase during DNA replication. The protein is DNA primase DnaG of Methanocorpusculum labreanum (strain ATCC 43576 / DSM 4855 / Z).